A 447-amino-acid polypeptide reads, in one-letter code: Putative branched-chain amino acid carrier protein SAR1419 (447 aa).

12 helical membrane passes run 6-26 (WVIGFTLFAMFFGAGNLIFPP), 40-60 (ILAFVLTGIGLPLLGVIVGAL), 74-94 (PKFSILFLIIIYLTIGPLFAI), 114-134 (SSIALFIFTIIYFIVVLYICL), 143-163 (IGSLLTPLLLITILAMIIKAY), 193-213 (GYLTMDAIAAIAFSMIVVNAV), 229-249 (LTAGLIAAIALIFIYISLGYI), 290-310 (LLGIIVALACLTTACGLIVAV), 326-346 (FVLVFILMSFIIANQGLNAVI), 350-370 (IPVLSIVYPVAITVVLLILIA), 382-402 (IPVIIVFILSIFSVISKLGWL), and 417-437 (LEWFPVAIIATILGYLVGIFV).

Belongs to the branched chain amino acid transporter family.

The protein localises to the cell membrane. Component of the transport system for branched-chain amino acids (leucine, isoleucine and valine), which is coupled to a proton motive force (Potential). Contributes to NaCl tolerance. In Staphylococcus aureus (strain MRSA252), this protein is Putative branched-chain amino acid carrier protein SAR1419.